The following is a 495-amino-acid chain: MAARRGKSTRTASEVGAAGPRASARSVNGAPTVPEAARPGARRNGPSRASGCRREKSGPDPREKPQVRTRTARAEDQAEGPSAPSERVEPPSAQGASLLRAGSCRAREARSARELRPQAGATELAAPARMEAPPGAWKLQTVLEKVRLSRHEISEAAEVVNWVVEHLLRRLQGGESEFKGVALLRTGSYYERVKISAPNEFDVMFKLEVPRIQLEEYCNSGAHYFVKFKRNPGGNPLEQFLEKEILSASKMLSKFRKIIKEEIKNIEGVTVERKRRGSPAVTLLISKPKEISVDIILALESKSSWPASTQKGLPISQWLGAKVKNNLKRQPFYLVPKHAKEGSGFQEETWRLSFSHIEKDILKNHGQSKTCCEIDGVKCCRKECLKLMKYLLEQLKKKFGNRRELAKFCSYHVKTAFFHVCTQDPHDNQWHLKNLECCFDNCVAYFLQCLKTEQLANYFIPGVNLFSRDLIDKPSKEFLSKQIEYERNNGFPVFW.

Residues 1–128 are disordered; that stretch reads MAARRGKSTR…AGATELAAPA (128 aa). The interval 1-134 is DNA-binding; the sequence is MAARRGKSTR…AAPARMEAPP (134 aa). N6-acetyllysine is present on lysine 7. Serine 13 carries the post-translational modification Phosphoserine. Composition is skewed to basic and acidic residues over residues 52–76 and 105–116; these read CRRE…RAED and RAREARSARELR. Lysine 56 is modified (N6-acetyllysine). A Phosphoserine modification is found at serine 57. Residues 57–68 form a required for association with the cell membrane region; that stretch reads SGPDPREKPQVR. The required for activation upon DNA viral infection stretch occupies residues 103-134; it reads SCRAREARSARELRPQAGATELAAPARMEAPP. The short motif at 143–148 is the Nuclear export signal element; sequence LEKVRL. Lysine 145 is subject to N6-lactoyllysine. A DNA-binding region spans residues 147-190; sequence RLSRHEISEAAEVVNWVVEHLLRRLQGGESEFKGVALLRTGSYY. At glutamate 165 the chain carries PolyADP-ribosyl glutamic acid. Threonine 186 contributes to the GTP binding site. Phosphoserine is present on serine 188. Residue serine 188 coordinates ATP. Tyrosine 190 carries the phosphotyrosine modification. 2 residues coordinate Mg(2+): glutamate 200 and aspartate 202. A 2',3'-cGAMP-binding site is contributed by aspartate 202. A Glycyl lysine isopeptide (Lys-Gly) (interchain with G-Cter in SUMO) cross-link involves residue lysine 206. Residue lysine 260 forms a Glycyl lysine isopeptide (Lys-Gly) (interchain with G-Cter in ubiquitin) linkage. At glutamate 261 the chain carries 5-glutamyl polyglutamate. Residues 268–278 carry the Nuclear localization signal motif; it reads GVTVERKRRGS. Serine 278 bears the Phosphoserine mark. A GTP-binding site is contributed by aspartate 294. Position 294 (aspartate 294) interacts with Mg(2+). 2',3'-cGAMP is bound at residue aspartate 294. The tract at residues 316–357 is interaction with collided ribosomes; it reads SQWLGAKVKNNLKRQPFYLVPKHAKEGSGFQEETWRLSFSHI. Lysine 322 is covalently cross-linked (Glycyl lysine isopeptide (Lys-Gly) (interchain with G-Cter in SUMO); alternate). Residue lysine 322 forms a Glycyl lysine isopeptide (Lys-Gly) (interchain with G-Cter in ubiquitin); alternate linkage. 2',3'-cGAMP is bound by residues lysine 337 and arginine 351. 351-358 is a GTP binding site; that stretch reads RLSFSHIE. Glutamate 358 is a binding site for ATP. Lysine 359 is modified (N6-acetyllysine). Lysine 359 participates in a covalent cross-link: Glycyl lysine isopeptide (Lys-Gly) (interchain with G-Cter in SUMO); alternate. Lysine 359 participates in a covalent cross-link: Glycyl lysine isopeptide (Lys-Gly) (interchain with G-Cter in ubiquitin); alternate. Residues 359-382 are DNA-binding; that stretch reads KDILKNHGQSKTCCEIDGVKCCRK. Histidine 365 provides a ligand contact to Zn(2+). An N6-acetyllysine modification is found at lysine 369. Residue lysine 369 forms a Glycyl lysine isopeptide (Lys-Gly) (interchain with G-Cter in SUMO) linkage. Zn(2+) is bound by residues cysteine 371, cysteine 372, and cysteine 379. Residues cysteine 379 and cysteine 380 are each lipidated (S-palmitoyl cysteine). Residues lysine 386, lysine 389, lysine 396, and lysine 397 each participate in a glycyl lysine isopeptide (Lys-Gly) (interchain with G-Cter in ubiquitin) cross-link. The residue at position 389 (lysine 389) is an N6-acetyllysine. Lysine 389 serves as a coordination point for ATP. The residue at position 410 (serine 410) is a Phosphoserine. 410–414 lines the ATP pocket; it reads SYHVK. Cysteine 449 is lipidated: S-palmitoyl cysteine. An N6-methyllysine modification is found at lysine 481.

This sequence belongs to the mab-21 family. Monomer in the absence of DNA. Homodimer in presence of dsDNA: forms a 2:2 dimer with two enzymes binding to two DNA molecules. Interacts with nucleosomes; interaction is mainly mediated via histones H2A and H2B and inactivates the nucleotidyltransferase activity by blocking DNA-binding and subsequent activation. Interacts with PQBP1 (via WW domain). Interacts with TRIM14; this interaction recruits USP14, leading to deubiquitinate and stabilize CGAS and promote type I interferon production. Interacts with ZCCHC3; promoting sensing of dsDNA by CGAS. Interacts (when not monomethylated) with (poly-ADP-ribosylated) PARP1; interaction takes place in the nucleus and prevents the formation of the PARP1-TIMELESS complex. Interacts (when monomethylated) with SGF29; interaction with SGF29 prevents interaction with PARP1. Interacts with PCBP2; preventing the formation of liquid-like droplets in which CGAS is activated. Interacts with IRGM; promoting CGAS degradation. It depends on Mg(2+) as a cofactor. Mn(2+) is required as a cofactor. Requires Zn(2+) as cofactor. In terms of processing, the N-terminal disordered part (1-134) is phosphorylated by AURKB during the G2-M transition, blocking CGAS liquid phase separation and preventing activation. Phosphorylation at Tyr-190 by BLK promotes cytosolic retention. Localizes into the nucleus following dephosphorylation at Tyr-190. Phosphorylation at Ser-410 activates the nucleotidyltransferase activity. Dephosphorylation at Ser-410 by PPP6C impairs its ability to bind GTP, thereby inactivating it. Phosphorylation at Ser-188 by PRKDC inhibits its cyclic GMP-AMP synthase activity by impairing homodimerization and activation. Phosphorylation at Ser-278 by AKT (AKT1, AKT2 or AKT3) suppresses the nucleotidyltransferase activity. Phosphorylation at Ser-278 by CDK1 during mitosis leads to its inhibition, thereby preventing CGAS activation by self-DNA during mitosis. Dephosphorylated at Ser-278 by protein phosphatase PP1 upon mitotic exit. Ubiquitinated at Lys-389 via 'Lys-48'-linked polyubiquitin chains, leading to its SQSTM1-mediated autophagic degradation. Interaction with TRIM14 promotes recruitment of USP14, leading to deubiquitinate Lys-389 and stabilize CGAS. Ubiquitinated at Lys-359 by RNF185 via 'Lys-27'-linked polyubiquitination, promoting CGAS cyclic GMP-AMP synthase activity. Monoubiquitination at Lys-322 by TRIM56 promotes oligomerization and subsequent activation. Monoubiquitination by TRIM41 promotes CGAS activation. Ubiquitination at Lys-260 via 'Lys-48'-linked polyubiquitination promotes its degradation. Deubiquitination at Lys-260 by USP29 promotes its stabilization. Deubiquitinated by USP27X, promoting its stabilization. Ubiquitinated at Lys-386 via 'Lys-63'-linked polyubiquitin chains by MARCHF8, leading to the inhibition of its DNA binding ability. In cycling cells, nucleosome-bound CGAS is ubiquitinated at Lys-396 and Lys-397 via 'Lys-48'-linked polyubiquitin chains by the ECS(SPSB3) complex, leading to its degradation: ubiquitination and degradation of nuclear CGAS during G1 and G2 phases is required to promote low intranuclear CGAS abundance before the next mitotic cycle. Post-translationally, sumoylated at Lys-206 by TRIM38 in uninfected cells and during the early phase of viral infection, promoting its stability by preventing ubiquitination at Lys-260 and subsequent degradation. Desumoylated by SENP2 during the late phase of viral infection. Sumoylation at Lys-322, Lys-359 and Lys-369 prevents DNA-binding, oligomerization and nucleotidyltransferase activity. Desumoylation at Lys-322, Lys-359 and Lys-369 by SENP7 relieves inhibition and activates CGAS. In terms of processing, polyglutamylated by TTLL6 at Glu-261, leading to impair DNA-binding activity. Deglutamylated by AGBL5/CCP5 and AGBL6/CCP6. Acetylation at Lys-359, Lys-369 and Lys-389 inhibits the cyclic GMP-AMP synthase activity. Deacetylated upon cytosolic DNA challenge such as viral infections. Acetylation by KAT5 increases the cyclic GMP-AMP synthase activity by promoting DNA-binding and subsequent activation. Post-translationally, proteolytically cleaved by apoptotic caspases during apoptosis, leading to its inactivation. The damage of the nucleus and the mitochondria during apoptosis leads to leakage of nuclear and mitochondrial DNA, which activate CGAS: cleavage and inactivation during apoptosis in required to prevent cytokine overproduction. Cleaved by CASP7 and CASP3 during virus-induced apoptosis, thereby inactivating it and preventing cytokine overproduction. Cleaved by CASP1 upon DNA virus infection; the cleavage impairs cGAMP production. Also cleaved by the pyroptotic CASP4 during non-canonical inflammasome activation; does not cut at the same sites than CASP1. In terms of processing, degraded via selective autophagy following interaction with IRGM. IRGM promotes CGAS recruitment to autophagosome membranes, promoting its SQSTM1/p62-dependent autophagic degradation. Poly-ADP-ribosylation at Glu-165 by PARP1 impairs DNA-binding, thereby preventing the cyclic GMP-AMP synthase activity. Post-translationally, palmitoylation at Cys-449 by ZDHHC18 impairs DNA-binding, thereby preventing the cyclic GMP-AMP synthase activity. Palmitoylation at Cys-379 and Cys-380 by ZDHHC9 promotes homodimerization and cyclic GMP-AMP synthase activity. Depalmitoylation at Cys-379 and Cys-380 by LYPLAL1 impairs homodimerization and cyclic GMP-AMP synthase activity. In terms of processing, monomethylated at Lys-481 by SETD7. Monomethylation promotes interaction with SGF29, preventing interaction between PARP1 nad SGF29. Demethylation by RIOX1 promotes interaction with PARP1, followed by PARP1 inactivation. Lactylation by AARS2 prevents ability to undergo liquid-liquid phase separation (LLPS), thereby inhibiting CGAS activation.

It is found in the nucleus. The protein resides in the chromosome. It localises to the cell membrane. Its subcellular location is the cytoplasm. The protein localises to the cytosol. The catalysed reaction is GTP + ATP = 2',3'-cGAMP + 2 diphosphate. It carries out the reaction GTP + ATP = pppGp(2'-5')A + diphosphate. The enzyme catalyses pppGp(2'-5')A = 2',3'-cGAMP + diphosphate. The enzyme activity is strongly increased by double-stranded DNA (dsDNA), but not by single-stranded DNA or RNA. DNA-binding induces the formation of liquid-like droplets in which CGAS is activated. Liquid-like droplets also create a selective environment that restricts entry of negative regulators, such as TREX1 or BANF1/BAF, allowing sensing of DNA. A number of mechanisms exist to restrict its activity toward self-DNA. The nucleotidyltransferase activity is inhibited in the nucleus via its association with nucleosomes: interacts with the acidic patch of histones H2A and H2B, thereby blocking DNA-binding and subsequent activation. CGAS is also inactive when associated with mitotic chromatin. Chromatin-bound CGAS cannot be activated by exogenous DNA in mitotic cells: phosphorylation of the N-terminal disordered part by AURKB during the G2-M transition blocks CGAS liquid phase separation and activation. Activity toward self-DNA is inhibited by BANF1/BAF upon acute loss of nuclear membrane integrity: BANF1/BAF acts by outcompeting CGAS for DNA-binding, thereby preventing CGAS activation. DNA-induced activation at micronuclei is also limited by TREX1, which degrades micronuclear DNA upon nuclear envelope rupture, thereby preventing CGAS activation. CGAS can be released from nucleosomes and activated by MRE11 component of the MRN complex, which displaces CGAS from acidic-patch-mediated sequestration. Acetylation at Lys-359, Lys-369 and Lys-389 inhibits the cyclic GMP-AMP synthase activity. Acetylation by KAT5 increases the cyclic GMP-AMP synthase activity by promoting DNA-binding and subsequent activation. Phosphorylation at Ser-278 suppresses the nucleotidyltransferase activity. Phosphorylation at Ser-410 promotes the cyclic GMP-AMP synthase activity. Phosphorylation at Ser-188 inhibits its cyclic GMP-AMP synthase activity. Ubiquitination at Lys-359 via 'Lys-27'-linked polyubiquitination enhances the cyclic GMP-AMP synthase activity. Monoubiquitination at Lys-322 promotes oligomerization and subsequent activation. Sumoylation at Lys-322, Lys-359 and Lys-369 prevents DNA-binding, oligomerization and nucleotidyltransferase activity. The enzyme activity is impaired by the cleavage by CASP1. In addition to DNA, also activated by collided ribosomes upon translation stress: specifically binds collided ribosomes, promoting its activation and triggering type-I interferon production. Functionally, nucleotidyltransferase that catalyzes the formation of cyclic GMP-AMP (2',3'-cGAMP) from ATP and GTP and plays a key role in innate immunity. Catalysis involves both the formation of a 2',5' phosphodiester linkage at the GpA step and the formation of a 3',5' phosphodiester linkage at the ApG step, producing c[G(2',5')pA(3',5')p]. Acts as a key DNA sensor: directly binds double-stranded DNA (dsDNA), inducing the formation of liquid-like droplets in which CGAS is activated, leading to synthesis of 2',3'-cGAMP, a second messenger that binds to and activates STING1, thereby triggering type-I interferon production. Preferentially binds long dsDNA (around 45 bp) and forms ladder-like networks that function cooperatively to stabilize individual cGAS-dsDNA complexes. Acts as a key foreign DNA sensor, the presence of double-stranded DNA (dsDNA) in the cytoplasm being a danger signal that triggers the immune responses. Has antiviral activity by sensing the presence of dsDNA from DNA viruses in the cytoplasm. Also acts as an innate immune sensor of infection by retroviruses by detecting the presence of reverse-transcribed DNA in the cytosol. Detection of retroviral reverse-transcribed DNA in the cytosol may be indirect and be mediated via interaction with PQBP1, which directly binds reverse-transcribed retroviral DNA. Also detects the presence of DNA from bacteria. 2',3'-cGAMP can be transferred from producing cells to neighboring cells through gap junctions, leading to promote STING1 activation and convey immune response to connecting cells. 2',3'-cGAMP can also be transferred between cells by virtue of packaging within viral particles contributing to IFN-induction in newly infected cells in a cGAS-independent but STING1-dependent manner. Also senses the presence of neutrophil extracellular traps (NETs) that are translocated to the cytosol following phagocytosis, leading to synthesis of 2',3'-cGAMP. In addition to foreign DNA, can also be activated by endogenous nuclear or mitochondrial DNA. When self-DNA leaks into the cytosol during cellular stress (such as mitochondrial stress, DNA damage, mitotic arrest or senescence), or is present in form of cytosolic micronuclei, CGAS is activated leading to a state of sterile inflammation. Acts as a regulator of cellular senescence by binding to cytosolic chromatin fragments that are present in senescent cells, leading to trigger type-I interferon production via STING1 and promote cellular senescence. Also involved in the inflammatory response to genome instability and double-stranded DNA breaks: acts by localizing to micronuclei arising from genome instability. Micronuclei, which are frequently found in cancer cells, consist of chromatin surrounded by their own nuclear membrane: following breakdown of the micronuclear envelope, a process associated with chromothripsis, CGAS binds self-DNA exposed to the cytosol, leading to 2',3'-cGAMP synthesis and subsequent activation of STING1 and type-I interferon production. In a healthy cell, CGAS is however kept inactive even in cellular events that directly expose it to self-DNA, such as mitosis, when cGAS associates with chromatin directly after nuclear envelope breakdown or remains in the form of postmitotic persistent nuclear cGAS pools bound to chromatin. Nuclear CGAS is inactivated by chromatin via direct interaction with nucleosomes, which block CGAS from DNA binding and thus prevent CGAS-induced autoimmunity. Also acts as a suppressor of DNA repair in response to DNA damage: inhibits homologous recombination repair by interacting with PARP1, the CGAS-PARP1 interaction leading to impede the formation of the PARP1-TIMELESS complex. In addition to DNA, also sense translation stress: in response to translation stress, translocates to the cytosol and associates with collided ribosomes, promoting its activation and triggering type-I interferon production. The polypeptide is Cyclic GMP-AMP synthase (Sus scrofa (Pig)).